We begin with the raw amino-acid sequence, 137 residues long: Early nodulin-55-1 (137 aa).

A Phytocyanin domain is found at 1–67; the sequence is KYDERTESVH…GLKLMVVVMS (67 aa). Residues N13, N51, and N68 are each glycosylated (N-linked (GlcNAc...) asparagine). Residues C20 and C55 are joined by a disulfide bond. The interval 70 to 115 is disordered; the sequence is TKKKLIHSPSPSSPSPSPSPSPSPSPSPSPSLSSPSPSPLPNNQGV. Pro residues predominate over residues 80 to 98; the sequence is PSSPSPSPSPSPSPSPSPS.

This sequence belongs to the early nodulin-like (ENODL) family.

It is found in the symbiosome. Its subcellular location is the peribacteroid membrane. Its function is as follows. May act as a carbohydrate transporter. The sequence is that of Early nodulin-55-1 from Glycine max (Soybean).